Here is a 307-residue protein sequence, read N- to C-terminus: Putative S-adenosyl-L-methionine-dependent methyltransferase MMAR_4570 (307 aa).

S-adenosyl-L-methionine-binding positions include aspartate 128 and 157 to 158 (DL).

Belongs to the UPF0677 family.

In terms of biological role, exhibits S-adenosyl-L-methionine-dependent methyltransferase activity. The polypeptide is Putative S-adenosyl-L-methionine-dependent methyltransferase MMAR_4570 (Mycobacterium marinum (strain ATCC BAA-535 / M)).